A 129-amino-acid polypeptide reads, in one-letter code: Small ribosomal subunit protein uS11 (129 aa).

The protein belongs to the universal ribosomal protein uS11 family. Part of the 30S ribosomal subunit. Interacts with proteins S7 and S18. Binds to IF-3.

Located on the platform of the 30S subunit, it bridges several disparate RNA helices of the 16S rRNA. Forms part of the Shine-Dalgarno cleft in the 70S ribosome. The protein is Small ribosomal subunit protein uS11 of Francisella tularensis subsp. holarctica (strain FTNF002-00 / FTA).